A 177-amino-acid chain; its full sequence is Outer membrane lipoprotein Blc (177 aa).

The N-terminal stretch at 1-18 (MRILPVVAAVTAAFLVVA) is a signal peptide. Cys-19 carries N-palmitoyl cysteine lipidation. Cys-19 carries the S-diacylglycerol cysteine lipid modification.

The protein belongs to the calycin superfamily. Lipocalin family. Homodimer.

The protein resides in the cell outer membrane. Its function is as follows. Involved in the storage or transport of lipids necessary for membrane maintenance under stressful conditions. Displays a binding preference for lysophospholipids. The protein is Outer membrane lipoprotein Blc of Citrobacter freundii.